The chain runs to 493 residues: Glutamyl-tRNA(Gln) amidotransferase subunit A (493 aa).

Catalysis depends on charge relay system residues lysine 79 and serine 159. Catalysis depends on serine 183, which acts as the Acyl-ester intermediate.

It belongs to the amidase family. GatA subfamily. Heterotrimer of A, B and C subunits.

It carries out the reaction L-glutamyl-tRNA(Gln) + L-glutamine + ATP + H2O = L-glutaminyl-tRNA(Gln) + L-glutamate + ADP + phosphate + H(+). Functionally, allows the formation of correctly charged Gln-tRNA(Gln) through the transamidation of misacylated Glu-tRNA(Gln) in organisms which lack glutaminyl-tRNA synthetase. The reaction takes place in the presence of glutamine and ATP through an activated gamma-phospho-Glu-tRNA(Gln). The sequence is that of Glutamyl-tRNA(Gln) amidotransferase subunit A from Rhizobium etli (strain ATCC 51251 / DSM 11541 / JCM 21823 / NBRC 15573 / CFN 42).